Here is a 359-residue protein sequence, read N- to C-terminus: Pyruvate dehydrogenase E1 component subunit beta, mitochondrial (359 aa).

Residues 1–30 constitute a mitochondrion transit peptide; it reads MAVVAVLVRKPLEQVSGLLRRRFHRTAPAA. The residue at position 67 (tyrosine 67) is a Phosphotyrosine. A thiamine diphosphate-binding site is contributed by glutamate 89. Isoleucine 142, alanine 190, isoleucine 191, aspartate 193, and asparagine 195 together coordinate K(+). Residue lysine 354 is modified to N6-acetyllysine.

In terms of assembly, heterotetramer of two PDHA1 and two PDHB subunits. The heterotetramer interacts with DLAT, and is part of the multimeric pyruvate dehydrogenase complex that contains multiple copies of pyruvate dehydrogenase (E1), dihydrolipoamide acetyltransferase (DLAT, E2) and lipoamide dehydrogenase (DLD, E3). These subunits are bound to an inner core composed of about 48 DLAT and 12 PDHX molecules. Interacts with DLAT. Thiamine diphosphate serves as cofactor.

It localises to the mitochondrion matrix. It catalyses the reaction N(6)-[(R)-lipoyl]-L-lysyl-[protein] + pyruvate + H(+) = N(6)-[(R)-S(8)-acetyldihydrolipoyl]-L-lysyl-[protein] + CO2. Functionally, the pyruvate dehydrogenase complex catalyzes the overall conversion of pyruvate to acetyl-CoA and CO(2), and thereby links the glycolytic pathway to the tricarboxylic cycle. This chain is Pyruvate dehydrogenase E1 component subunit beta, mitochondrial (PDHB), found in Bos taurus (Bovine).